The sequence spans 435 residues: Acetylcholine receptor-like protein cup-4 (435 aa).

An N-terminal signal peptide occupies residues 1-24; the sequence is MRLLLIFTVIFVFYLAILKRDVNA. N-linked (GlcNAc...) asparagine glycans are attached at residues Asn-41, Asn-68, Asn-237, and Asn-249. A run of 2 helical transmembrane segments spans residues 298–318 and 341–361; these read VSFFAPTVSLAFVINLMAIYL and ITLFHILLISNIVSAVFHGVL. Residue Asn-403 is glycosylated (N-linked (GlcNAc...) asparagine). The helical transmembrane segment at 413-433 threads the bilayer; that stretch reads PLAGLAMFVYFVIMFILYLVV.

The protein belongs to the ligand-gated ion channel (TC 1.A.9) family. Acetylcholine receptor (TC 1.A.9.1) subfamily.

The protein resides in the cytoplasmic vesicle membrane. Its function is as follows. Thought to regulate endocytosis in coelomocytes through modulation of phospholipase C activity. Possible acetylcholine receptor. In Caenorhabditis briggsae, this protein is Acetylcholine receptor-like protein cup-4.